The chain runs to 130 residues: Snaclec B8 (130 aa).

Cystine bridges form between Cys-2-Cys-13, Cys-30-Cys-124, and Cys-99-Cys-116. The C-type lectin domain maps to 9–125; the sequence is HEGHCYKVFK…CELAYHFICM (117 aa).

The protein belongs to the snaclec family. Heterodimer; disulfide-linked. In terms of tissue distribution, expressed by the venom gland.

The protein resides in the secreted. Functionally, interferes with one step of hemostasis (modulation of platelet aggregation, or coagulation cascade, for example). In Macrovipera lebetinus (Levantine viper), this protein is Snaclec B8.